The primary structure comprises 109 residues: Probable endoribonuclease MazF5 (109 aa).

It belongs to the PemK/MazF family. Forms a complex with cognate antitoxin MazE5.

Functionally, toxic component of a type II toxin-antitoxin (TA) system. Upon expression in M.smegmatis inhibits colony formation. Its toxic effect is neutralized by coexpression with cognate antitoxin MazE5. Probably an endoribonuclease. The protein is Probable endoribonuclease MazF5 (mazF5) of Mycobacterium tuberculosis (strain ATCC 25618 / H37Rv).